The following is a 64-amino-acid chain: Protein YnhH (64 aa).

The sequence is that of Protein YnhH from Escherichia coli (strain K12).